We begin with the raw amino-acid sequence, 100 residues long: MHAIVVCGAKQYLVHENESIFVEKLAGKVGQEIQLDKVLMLDEKIGKPYLEKAKVVCVIEKHGLKSKIKLIKHISQKHHLKRYGHRQPYTKLKVVRFIHD.

It belongs to the bacterial ribosomal protein bL21 family. As to quaternary structure, part of the 50S ribosomal subunit. Contacts protein L20.

In terms of biological role, this protein binds to 23S rRNA in the presence of protein L20. The polypeptide is Large ribosomal subunit protein bL21 (Mycoplasma genitalium (strain ATCC 33530 / DSM 19775 / NCTC 10195 / G37) (Mycoplasmoides genitalium)).